The primary structure comprises 750 residues: Photosystem I P700 chlorophyll a apoprotein A1 (750 aa).

The next 8 membrane-spanning stretches (helical) occupy residues 70–93 (VFSA…FHGA), 156–179 (LYCT…FHYH), 195–219 (LNHH…HVSL), 291–309 (IAHH…GHMY), 346–369 (WHAQ…HHMY), 385–411 (LSLF…IFMV), 433–455 (AIIS…LYIH), and 531–549 (FLVH…LILL). The [4Fe-4S] cluster site is built by C573 and C582. 2 helical membrane passes run 589-610 (HVFL…HFSW) and 664-686 (LSAY…MFLF). H675 is a binding site for chlorophyll a'. Residues M683 and Y691 each coordinate chlorophyll a. Residue W692 coordinates phylloquinone. Residues 724-744 (AVGVTHYLLGGIATTWAFFLA) form a helical membrane-spanning segment.

Belongs to the PsaA/PsaB family. The PsaA/B heterodimer binds the P700 chlorophyll special pair and subsequent electron acceptors. PSI consists of a core antenna complex that captures photons, and an electron transfer chain that converts photonic excitation into a charge separation. The eukaryotic PSI reaction center is composed of at least 11 subunits. P700 is a chlorophyll a/chlorophyll a' dimer, A0 is one or more chlorophyll a, A1 is one or both phylloquinones and FX is a shared 4Fe-4S iron-sulfur center. serves as cofactor.

The protein localises to the plastid. Its subcellular location is the chloroplast thylakoid membrane. The enzyme catalyses reduced [plastocyanin] + hnu + oxidized [2Fe-2S]-[ferredoxin] = oxidized [plastocyanin] + reduced [2Fe-2S]-[ferredoxin]. PsaA and PsaB bind P700, the primary electron donor of photosystem I (PSI), as well as the electron acceptors A0, A1 and FX. PSI is a plastocyanin-ferredoxin oxidoreductase, converting photonic excitation into a charge separation, which transfers an electron from the donor P700 chlorophyll pair to the spectroscopically characterized acceptors A0, A1, FX, FA and FB in turn. Oxidized P700 is reduced on the lumenal side of the thylakoid membrane by plastocyanin. The protein is Photosystem I P700 chlorophyll a apoprotein A1 of Acorus calamus (Sweet flag).